The sequence spans 622 residues: Low affinity potassium transport system protein Kup (622 aa).

12 helical membrane-spanning segments follow: residues 9 to 29 (LPAV…TSPL), 49 to 69 (VFGF…LKYL), 101 to 121 (VLVI…VITP), 137 to 157 (PAMD…LFII), 165 to 185 (VGKL…VLGV), 212 to 232 (AVSF…EALY), 247 to 267 (WFTV…ALLL), 276 to 296 (PFFL…ATLA), 337 to 357 (IYIP…IVSF), 363 to 383 (LAAA…ILFC), 397 to 417 (AWVL…ANVV), and 419 to 439 (ILSG…IMTT).

This sequence belongs to the HAK/KUP transporter (TC 2.A.72) family.

Its subcellular location is the cell inner membrane. It carries out the reaction K(+)(in) + H(+)(in) = K(+)(out) + H(+)(out). Responsible for the low-affinity transport of potassium into the cell. Likely operates as a K(+):H(+) symporter. This Pectobacterium atrosepticum (strain SCRI 1043 / ATCC BAA-672) (Erwinia carotovora subsp. atroseptica) protein is Low affinity potassium transport system protein Kup.